We begin with the raw amino-acid sequence, 1781 residues long: Signal-induced proliferation-associated 1-like protein 3 (1781 aa).

Disordered stretches follow at residues 45 to 166 (SMSQ…FLPL) and 239 to 332 (TELL…EASR). Residues 54–73 (PATATATATATTRPSPTTPA) show a composition bias toward low complexity. Residues 87–97 (PPKREALREHS) are compositionally biased toward basic and acidic residues. S100 is modified (phosphoserine). Positions 118-135 (RSIQNGQPPTSTPASSGS) are enriched in polar residues. A compositionally biased stretch (basic residues) spans 137–146 (AFHRLSRRRS). S146 carries the phosphoserine modification. S401 is subject to Phosphoserine. One can recognise a Rap-GAP domain in the interval 611 to 828 (LLKLDEQGLC…RTRQEYLKDL (218 aa)). One can recognise a PDZ domain in the interval 966 to 1042 (DMTLRRNGLG…VKVVIIPPFE (77 aa)). Disordered stretches follow at residues 1046-1112 (PRRG…SLSR), 1124-1221 (ESQP…QKPE), 1236-1565 (AGSS…GLEP), and 1583-1636 (TLPA…RLDP). 2 stretches are compositionally biased toward polar residues: residues 1080 to 1111 (APWQ…QSLS) and 1157 to 1166 (PSGSFSTPGS). Residues 1196–1210 (DGTSSGDSSSGGLTS) show a composition bias toward low complexity. Over residues 1245–1261 (SRQDAAGKDSPNRHSKG) the composition is skewed to basic and acidic residues. Residues 1266-1281 (SSHSSSNTLSSNASSS) are compositionally biased toward low complexity. The span at 1304–1322 (GGSSDSGIDTTLYTSSPSC) shows a compositional bias: polar residues. At S1364 the chain carries Phosphoserine. At T1387 the chain carries Phosphothreonine. A compositionally biased stretch (polar residues) spans 1425–1441 (RPSQLAQPSPFQLSASV). An N6-acetyllysine modification is found at K1448. Residues 1509–1518 (TIEDDLKKLI) show a composition bias toward basic and acidic residues. The span at 1532–1547 (GQSPQKGLQRTLSDES) shows a compositional bias: polar residues. Residues S1544 and S1547 each carry the phosphoserine modification. Residues 1599 to 1609 (PGATPAAGSGF) are compositionally biased toward low complexity. Phosphoserine is present on residues S1619 and S1622. Basic and acidic residues predominate over residues 1625–1635 (DGRDRPLRRLD). Position 1677 is a phosphoserine (S1677). Residues 1685–1712 (SPVHSHLSLERGPPTPRTTPTMSEEPPL) form a disordered region. Phosphothreonine is present on residues T1699 and T1703. A coiled-coil region spans residues 1720-1774 (QLEVMLKQLHTDLQKEKQDKVVLQSEVASLRQNNQRLQEESQAASEQLRKFAEIF).

The protein resides in the apical cell membrane. In terms of biological role, plays a critical role in epithelial cell morphogenesis, polarity, adhesion and cytoskeletal organization in the lens. The sequence is that of Signal-induced proliferation-associated 1-like protein 3 (SIPA1L3) from Homo sapiens (Human).